Reading from the N-terminus, the 224-residue chain is Germin-like protein 8-8 (224 aa).

The signal sequence occupies residues 1–22 (MASPSFCLLAALLALVSWQAIA). Cysteines 32 and 47 form a disulfide. The Cupin type-1 domain occupies 62–212 (AMLDTPRKTN…AFQVEKGTID (151 aa)). N-linked (GlcNAc...) asparagine glycosylation is present at N76. Mn(2+) is bound by residues H109, H111, and E116. The N-linked (GlcNAc...) asparagine glycan is linked to N135. Mn(2+) is bound at residue H157.

The protein belongs to the germin family. In terms of assembly, oligomer (believed to be a pentamer but probably hexamer).

The protein resides in the secreted. It is found in the extracellular space. Its subcellular location is the apoplast. In terms of biological role, plays a role in broad-spectrum disease resistance. Probably has no oxalate oxidase activity even if the active site is conserved. The protein is Germin-like protein 8-8 of Oryza sativa subsp. japonica (Rice).